The sequence spans 140 residues: CDGSH iron-sulfur domain-containing protein 2 homolog (140 aa).

At 1-35 the chain is on the lumenal side; the sequence is MEAIAKLIKVQLPNYLQKLPVPSSLSGFAELSPSD. The chain crosses the membrane as a helical span at residues 36–59; sequence AIAVVFPFAVVSWLIGYSTYKFFQ. The Cytoplasmic portion of the chain corresponds to 60 to 140; sequence PKAVELPPSP…GPLIVKGKAN (81 aa). Residues C104, C106, C115, and H119 each coordinate [2Fe-2S] cluster.

This sequence belongs to the CISD protein family. CISD2 subfamily. [2Fe-2S] cluster is required as a cofactor.

It localises to the endoplasmic reticulum membrane. The sequence is that of CDGSH iron-sulfur domain-containing protein 2 homolog from Trichoplax adhaerens (Trichoplax reptans).